We begin with the raw amino-acid sequence, 241 residues long: Large ribosomal subunit protein uL2 (241 aa).

Residues Ala200–Arg241 are disordered.

The protein belongs to the universal ribosomal protein uL2 family. As to quaternary structure, part of the 50S ribosomal subunit. Forms a bridge to the 30S subunit in the 70S ribosome.

In terms of biological role, one of the primary rRNA binding proteins. Required for association of the 30S and 50S subunits to form the 70S ribosome, for tRNA binding and peptide bond formation. It has been suggested to have peptidyltransferase activity; this is somewhat controversial. Makes several contacts with the 16S rRNA in the 70S ribosome. This chain is Large ribosomal subunit protein uL2, found in Methanosphaera stadtmanae (strain ATCC 43021 / DSM 3091 / JCM 11832 / MCB-3).